We begin with the raw amino-acid sequence, 221 residues long: Probable transaldolase (221 aa).

Residue K83 is the Schiff-base intermediate with substrate of the active site.

It belongs to the transaldolase family. Type 3B subfamily.

The protein resides in the cytoplasm. It carries out the reaction D-sedoheptulose 7-phosphate + D-glyceraldehyde 3-phosphate = D-erythrose 4-phosphate + beta-D-fructose 6-phosphate. It participates in carbohydrate degradation; pentose phosphate pathway; D-glyceraldehyde 3-phosphate and beta-D-fructose 6-phosphate from D-ribose 5-phosphate and D-xylulose 5-phosphate (non-oxidative stage): step 2/3. Transaldolase is important for the balance of metabolites in the pentose-phosphate pathway. This Herpetosiphon aurantiacus (strain ATCC 23779 / DSM 785 / 114-95) protein is Probable transaldolase.